The chain runs to 117 residues: Structural toxin peptide sea anemone type 9a (117 aa).

Positions 1-23 are cleaved as a signal peptide; that stretch reads MKTIIAIFSLAAMIVLVRPTPLE. Repeat copies occupy residues 28–56, 57–88, and 89–117. Residues 29–117 are 3 X approximate tandem repeats; that stretch reads RSIINVPCKK…GKCRKIHGCS (89 aa).

Contains 6 disulfide bonds. As to expression, expressed outside of acontia.

Its subcellular location is the secreted. The protein resides in the nematocyst. Its function is as follows. Putative neurotoxin. This chain is Structural toxin peptide sea anemone type 9a, found in Calliactis polypus (Hermit crab anemone).